The following is a 411-amino-acid chain: Argininosuccinate synthase (411 aa).

ATP contacts are provided by residues 10–18 (AYSGGLDTS) and A37. 2 residues coordinate L-citrulline: Y89 and S94. G119 is an ATP binding site. Residues T121, N125, and D126 each coordinate L-aspartate. L-citrulline is bound at residue N125. Residues R129, S178, S187, E263, and Y275 each coordinate L-citrulline.

The protein belongs to the argininosuccinate synthase family. Type 1 subfamily. Homotetramer.

The protein resides in the cytoplasm. It catalyses the reaction L-citrulline + L-aspartate + ATP = 2-(N(omega)-L-arginino)succinate + AMP + diphosphate + H(+). It participates in amino-acid biosynthesis; L-arginine biosynthesis; L-arginine from L-ornithine and carbamoyl phosphate: step 2/3. In Aeromonas hydrophila subsp. hydrophila (strain ATCC 7966 / DSM 30187 / BCRC 13018 / CCUG 14551 / JCM 1027 / KCTC 2358 / NCIMB 9240 / NCTC 8049), this protein is Argininosuccinate synthase.